The sequence spans 369 residues: Cystathionine gamma-synthase (369 aa).

Position 200 is an N6-(pyridoxal phosphate)lysine (Lys-200).

This sequence belongs to the trans-sulfuration enzymes family. In terms of assembly, homotetramer. The cofactor is pyridoxal 5'-phosphate.

The protein resides in the cytoplasm. It carries out the reaction O-succinyl-L-homoserine + L-cysteine = L,L-cystathionine + succinate + H(+). Catalyzes the formation of L-cystathionine from O-succinyl-L-homoserine (OSHS) and L-cysteine, via a gamma-replacement reaction. In the absence of thiol, catalyzes gamma-elimination to form 2-oxobutanoate, succinate and ammonia. In Haemophilus influenzae (strain ATCC 51907 / DSM 11121 / KW20 / Rd), this protein is Cystathionine gamma-synthase (metB).